Reading from the N-terminus, the 197-residue chain is UPF0215 protein MK0057 (197 aa).

The protein belongs to the UPF0215 family.

The protein is UPF0215 protein MK0057 of Methanopyrus kandleri (strain AV19 / DSM 6324 / JCM 9639 / NBRC 100938).